The chain runs to 194 residues: Phosphoheptose isomerase (194 aa).

The SIS domain occupies 37 to 194 (ISNSFKQGGK…LIEFEMAKQA (158 aa)). 52 to 54 (NGG) is a binding site for substrate. Zn(2+) is bound by residues H61 and E65. Substrate-binding positions include E65, 93–94 (ND), 119–121 (STS), S124, and Q172. 2 residues coordinate Zn(2+): Q172 and H180.

Belongs to the SIS family. GmhA subfamily. As to quaternary structure, homotetramer. Zn(2+) is required as a cofactor.

The protein localises to the cytoplasm. The enzyme catalyses 2 D-sedoheptulose 7-phosphate = D-glycero-alpha-D-manno-heptose 7-phosphate + D-glycero-beta-D-manno-heptose 7-phosphate. It participates in carbohydrate biosynthesis; D-glycero-D-manno-heptose 7-phosphate biosynthesis; D-glycero-alpha-D-manno-heptose 7-phosphate and D-glycero-beta-D-manno-heptose 7-phosphate from sedoheptulose 7-phosphate: step 1/1. Functionally, catalyzes the isomerization of sedoheptulose 7-phosphate in D-glycero-D-manno-heptose 7-phosphate. This chain is Phosphoheptose isomerase, found in Haemophilus influenzae (strain PittEE).